The sequence spans 181 residues: Ribosome maturation factor RimP (181 aa).

It belongs to the RimP family.

The protein resides in the cytoplasm. Functionally, required for maturation of 30S ribosomal subunits. This Sphingopyxis alaskensis (strain DSM 13593 / LMG 18877 / RB2256) (Sphingomonas alaskensis) protein is Ribosome maturation factor RimP.